We begin with the raw amino-acid sequence, 287 residues long: GDT1-like protein C17G8.08c (287 aa).

7 consecutive transmembrane segments (helical) span residues 7-27, 50-70, 89-109, 112-132, 194-214, 232-252, and 267-287; these read WAIIAVLLSTVVAKKIVGEGM, LIFSISMIFGCEIGDKTFIVA, ALFIMTLLGVLLGHAAPLLFP, LTDILGGVLFVIFGIKMLMEA, VMATLFSPLFIKAFALTFVSE, VYGVFMGANVGHACCTALAVI, and MFIGGILFIAFGLVYFYQGFF.

The protein belongs to the GDT1 family.

It localises to the membrane. The chain is GDT1-like protein C17G8.08c from Schizosaccharomyces pombe (strain 972 / ATCC 24843) (Fission yeast).